A 144-amino-acid chain; its full sequence is Transcriptional regulator SlyA (144 aa).

One can recognise an HTH marR-type domain in the interval 2–135; the sequence is ESSLGSDLAR…LNNIIAKLER (134 aa). The H-T-H motif DNA-binding region spans 49–72; the sequence is QIQLAKAIGIEQPSLVRTLDQLES.

It belongs to the SlyA family. Homodimer.

In terms of biological role, transcription regulator that can specifically activate or repress expression of target genes. The polypeptide is Transcriptional regulator SlyA (Blochmanniella floridana).